The following is a 259-amino-acid chain: FAD-linked sulfhydryl oxidase (259 aa).

The protein belongs to the baculoviridae p33 family. As to quaternary structure, homodimer.

Its subcellular location is the host cytoplasm. It is found in the host nucleus. It catalyses the reaction 2 R'C(R)SH + O2 = R'C(R)S-S(R)CR' + H2O2. Its function is as follows. Functional FAD-linked sulfhydryl oxidase that is required for infectious budded virion (BV) production and for the formation of enveloped occluded virion (ODV). In Lepidoptera (butterflies and moths), this protein is FAD-linked sulfhydryl oxidase (P33).